Consider the following 429-residue polypeptide: Glutamate-1-semialdehyde 2,1-aminomutase 2 (429 aa).

K268 bears the N6-(pyridoxal phosphate)lysine mark.

It belongs to the class-III pyridoxal-phosphate-dependent aminotransferase family. HemL subfamily. Homodimer. The cofactor is pyridoxal 5'-phosphate.

Its subcellular location is the cytoplasm. It catalyses the reaction (S)-4-amino-5-oxopentanoate = 5-aminolevulinate. It participates in porphyrin-containing compound metabolism; protoporphyrin-IX biosynthesis; 5-aminolevulinate from L-glutamyl-tRNA(Glu): step 2/2. In Geobacillus thermodenitrificans (strain NG80-2), this protein is Glutamate-1-semialdehyde 2,1-aminomutase 2.